Reading from the N-terminus, the 868-residue chain is MATFISVQLKKTSEVDLAKPLVKFIQQTYPSGGEEQAQYCRAAEELSKLRRAAVGRPLDKHEGALETLLRYYDQICSIEPKFPFSENQICLTFTWKDAFDKGSLFGGSVKLALASLGYEKSCVLFNCAALASQIAAEQNLDNDEGLKIAAKHYQFASGAFLHIKETVLSALSREPTVDISPDTVGTLSLIMLAQAQEVFFLKATRDKMKDAIIAKLANQAADYFGDAFKQCQYKDTLPKEVFPVLAAKHCIMQANAEYHQSILAKQQKKFGEEIARLQHAAELIKTVASRYDEYVNVKDFSDKINRALAAAKKDNDFIYHDRVPDLKDLDPIGKATLVKSTPVNVPISQKFTDLFEKMVPVSVQQSLAAYNQRKADLVNRSIAQMREATTLANGVLASLNLPAAIEDVSGDTVPQSILTKSRSVIEQGGIQTVDQLIKELPELLQRNREILDESLRLLDEEEATDNDLRAKFKERWQRTPSNELYKPLRAEGTNFRTVLDKAVQADGQVKECYQSHRDTIVLLCKPEPELNAAIPSANPAKTMQGSEVVNVLKSLLSNLDEVKKEREGLENDLKSVNFDMTSKFLTALAQDGVINEEALSVTELDRVYGGLTTKVQESLKKQEGLLKNIQVSHQEFSKMKQSNNEANLREEVLKNLATAYDNFVELVANLKEGTKFYNELTEILVRFQNKCSDIVFARKTERDELLKDLQQSIAREPSAPSIPTPAYQSSPAGGHAPTPPTPAPRTMPPTKPQPPARPPPPVLPANRAPSATAPSPVGAGTAAPAPSQTPGSAPPPQAQGPPYPTYPGYPGYCQMPMPMGYNPYAYGQYNMPYPPVYHQSPGQAPYPGPQQPSYPFPQPPQQSYYPQQ.

Alanine 2 is modified (N-acetylalanine). In terms of domain architecture, BRO1 spans 3 to 392 (TFISVQLKKT…AQMREATTLA (390 aa)). The interval 176-503 (TVDISPDTVG…NFRTVLDKAV (328 aa)) is interaction with CHMP4A, CHMP4B and CHMP4C. Residues 176 to 868 (TVDISPDTVG…PPQQSYYPQQ (693 aa)) form an interaction with EIAV p9 region. At lysine 215 the chain carries N6-acetyllysine. The segment at 418-868 (LTKSRSVIEQ…PPQQSYYPQQ (451 aa)) is interaction with SDCBP. Phosphothreonine is present on threonine 479. Serine 481 bears the Phosphoserine mark. The tract at residues 503–868 (VQADGQVKEC…PPQQSYYPQQ (366 aa)) is self-association. 2 disordered regions span residues 713-809 (IARE…YPGY) and 832-868 (PYPPVYHQSPGQAPYPGPQQPSYPFPQPPQQSYYPQQ). An interaction with TSG101 region spans residues 717–720 (PSAP). Serine 730 carries the post-translational modification Phosphoserine. Over residues 737–763 (PTPPTPAPRTMPPTKPQPPARPPPPVL) the composition is skewed to pro residues. Threonine 738 and threonine 741 each carry phosphothreonine. Arginine 745 bears the Omega-N-methylarginine mark. Positions 778–791 (GAGTAAPAPSQTPG) are enriched in low complexity. Composition is skewed to pro residues over residues 792–807 (SAPPPQAQGPPYPTYP) and 844–860 (APYPGPQQPSYPFPQPP). Positions 801 to 806 (PPYPTY) are interaction with CEP55. Positions 864 to 868 (YYPQQ) are essential to promote virus budding.

In terms of assembly, self-associates. Interacts with SH3KBP1/CIN85. Interacts with PDCD6 in a calcium -dependent manner. Interacts with TSG101 in a calcium-dependent manner; PDCD6IP homooligomerization may be required for TSG101-binding. Interacts with SGSM3. Directly interacts with CHMP4A, CHMP4B and CHMP4C. Directly interacts with CEP55 in a 1:2 stoechiometry. The interaction with CEP55 is required for PDCD6IP targeting to the midbody. May interact with PDGFRB. Interacts with SH3GL1 and SH3GL2/endophilin-1. Forms a complex with SDCBP and SDC2. Found in a complex with F-actin, TJP1/ZO-1 and PARD3. Interacts with CD2AP. Interacts with ARRDC1. Interacts (via BRO1 domain) with the ATG12-ATG3 conjugate; this interaction is bridged by ATG12 and promotes multiple PDCD6IP-mediated functions such as endolysosomal trafficking, macroautophagy and exosome biogenesis. As to quaternary structure, (Microbial infection) Interacts with HIV-1 p6. Interacts with HIV-1 p9. (Microbial infection) Interacts with EIAV p9. In terms of assembly, (Microbial infection) Interacts with Murine leukemia virus Gag polyprotein (via LYPX(n)L motif). As to quaternary structure, (Microbial infection) Interacts with ebola virus protein VP40 (via YPx(n)L/I motif). Post-translationally, may be phosphorylated on tyrosine residues by activated PDGFRB.

The protein resides in the cytoplasm. It localises to the cytosol. It is found in the melanosome. Its subcellular location is the cytoskeleton. The protein localises to the microtubule organizing center. The protein resides in the centrosome. It localises to the secreted. It is found in the extracellular exosome. Its subcellular location is the cell junction. The protein localises to the tight junction. The protein resides in the midbody. It localises to the midbody ring. Functionally, multifunctional protein involved in endocytosis, multivesicular body biogenesis, membrane repair, cytokinesis, apoptosis and maintenance of tight junction integrity. Class E VPS protein involved in concentration and sorting of cargo proteins of the multivesicular body (MVB) for incorporation into intralumenal vesicles (ILVs) that are generated by invagination and scission from the limiting membrane of the endosome. Binds to the phospholipid lysobisphosphatidic acid (LBPA) which is abundant in MVBs internal membranes. The MVB pathway requires the sequential function of ESCRT-O, -I,-II and -III complexes. The ESCRT machinery also functions in topologically equivalent membrane fission events, such as the terminal stages of cytokinesis. Adapter for a subset of ESCRT-III proteins, such as CHMP4, to function at distinct membranes. Required for completion of cytokinesis. May play a role in the regulation of both apoptosis and cell proliferation. Regulates exosome biogenesis in concert with SDC1/4 and SDCBP. By interacting with F-actin, PARD3 and TJP1 secures the proper assembly and positioning of actomyosin-tight junction complex at the apical sides of adjacent epithelial cells that defines a spatial membrane domain essential for the maintenance of epithelial cell polarity and barrier. In terms of biological role, (Microbial infection) Involved in HIV-1 virus budding. Can replace TSG101 it its role of supporting HIV-1 release; this function requires the interaction with CHMP4B. The ESCRT machinery also functions in topologically equivalent membrane fission events, such as enveloped virus budding (HIV-1 and other lentiviruses). This Homo sapiens (Human) protein is Programmed cell death 6-interacting protein.